The following is a 751-amino-acid chain: Glutamate carboxypeptidase 2 (751 aa).

Topologically, residues M1 to R19 are cytoplasmic. S10 bears the Phosphoserine mark. The helical; Signal-anchor for type II membrane protein transmembrane segment at W20–I43 threads the bilayer. The Extracellular portion of the chain corresponds to K44–V750. N51, N77, N122, N141, N154, and N196 each carry an N-linked (GlcNAc...) asparagine glycan. Substrate is bound by residues R211 and N258. The Ca(2+) site is built by T270 and Y273. An NAALADase region spans residues A275–L588. N337 is a glycosylation site (N-linked (GlcNAc...) asparagine). Zn(2+) contacts are provided by H378 and D388. Residue E425 participates in substrate binding. E425 acts as the Nucleophile; for NAALADase activity in catalysis. E426 contacts Zn(2+). Ca(2+)-binding residues include E434 and E437. D454 serves as a coordination point for Zn(2+). N-linked (GlcNAc...) asparagine glycosylation is found at N460 and N477. Residues S518–G519, N520, R535–R537, Y553, and Y553–H554 contribute to the substrate site. A Zn(2+)-binding site is contributed by H554. N-linked (GlcNAc...) asparagine glycosylation is present at N614. The active-site Charge relay system is the S629. N-linked (GlcNAc...) asparagine glycosylation is found at N639 and N646. Catalysis depends on charge relay system residues D667 and H690. K700 to Y701 is a substrate binding site.

Belongs to the peptidase M28 family. M28B subfamily. Homodimer. Requires Zn(2+) as cofactor. As to expression, high expression in the duodenum and in the jejunum brush-border membrane. Weak expression in kidney.

Its subcellular location is the cell membrane. The enzyme catalyses Release of an unsubstituted, C-terminal glutamyl residue, typically from Ac-Asp-Glu or folylpoly-gamma-glutamates.. Its activity is regulated as follows. The NAALADase activity is inhibited by quisqualic acid, beta-NAAG and 2-(phosphonomethyl) pentanedioic acid (PMPA). Ethanol ingestion decreases the folate hydrolase activity by 50%. Functionally, has both folate hydrolase and N-acetylated-alpha-linked-acidic dipeptidase (NAALADase) activity. Has a preference for tri-alpha-glutamate peptides. In the intestine, required for the uptake of folate. In the brain, modulates excitatory neurotransmission through the hydrolysis of the neuropeptide, N-aceylaspartylglutamate (NAAG), thereby releasing glutamate. Its function is as follows. Also exhibits a dipeptidyl-peptidase IV type activity. In vitro, cleaves Gly-Pro-AMC. In Sus scrofa (Pig), this protein is Glutamate carboxypeptidase 2 (FOLH1).